The sequence spans 163 residues: D-aminoacyl-tRNA deacylase (163 aa).

The short motif at 141–142 (GP) is the Gly-cisPro motif, important for rejection of L-amino acids element.

It belongs to the DTD family. In terms of assembly, homodimer.

The protein localises to the cytoplasm. The catalysed reaction is glycyl-tRNA(Ala) + H2O = tRNA(Ala) + glycine + H(+). It catalyses the reaction a D-aminoacyl-tRNA + H2O = a tRNA + a D-alpha-amino acid + H(+). Functionally, an aminoacyl-tRNA editing enzyme that deacylates mischarged D-aminoacyl-tRNAs. Also deacylates mischarged glycyl-tRNA(Ala), protecting cells against glycine mischarging by AlaRS. Acts via tRNA-based rather than protein-based catalysis; rejects L-amino acids rather than detecting D-amino acids in the active site. By recycling D-aminoacyl-tRNA to D-amino acids and free tRNA molecules, this enzyme counteracts the toxicity associated with the formation of D-aminoacyl-tRNA entities in vivo and helps enforce protein L-homochirality. This Neisseria meningitidis serogroup A / serotype 4A (strain DSM 15465 / Z2491) protein is D-aminoacyl-tRNA deacylase.